A 507-amino-acid chain; its full sequence is Cobyric acid synthase (507 aa).

The GATase cobBQ-type domain occupies 251–448; the sequence is DIDIAVVHLP…LHGLFDSDAF (198 aa). Cys332 functions as the Nucleophile in the catalytic mechanism. His440 is an active-site residue.

This sequence belongs to the CobB/CobQ family. CobQ subfamily.

It participates in cofactor biosynthesis; adenosylcobalamin biosynthesis. Catalyzes amidations at positions B, D, E, and G on adenosylcobyrinic A,C-diamide. NH(2) groups are provided by glutamine, and one molecule of ATP is hydrogenolyzed for each amidation. This chain is Cobyric acid synthase, found in Klebsiella pneumoniae (strain 342).